Consider the following 1534-residue polypeptide: ABC transporter G family member 6 (1534 aa).

Basic and acidic residues predominate over residues 1 to 11 (MAKQDPKDKNS). A disordered region spans residues 1–85 (MAKQDPKDKN…ESNYDSDDEK (85 aa)). Residues 21–65 (NNNNNENLDNDQELLNNNNNNNNNNNNNNNNNNNNNNNNNNNNNL) are compositionally biased toward low complexity. The ABC transporter 1 domain occupies 138-385 (VYCRNATYTV…FKKLGFACPS (248 aa)). 177-184 (GTPGCGKS) lines the ATP pocket. An ABC transmembrane type-2 1 domain is found at 481 to 757 (RRNYYNFLTR…VVCFFALKYF (277 aa)). 7 helical membrane passes run 486 to 506 (NFLT…TLYW), 521 to 541 (LLFF…NSFF), 566 to 586 (IICD…IVYW), 592 to 612 (PVFI…NLSL), 625 to 645 (IEIA…FSGF), 652 to 672 (IGGW…FQGL), and 734 to 754 (VVFG…FFAL). The tract at residues 781–907 (KQDEESAAIS…KSKNGKDIGS (127 aa)) is disordered. A compositionally biased stretch (acidic residues) spans 797-808 (IDDDNDDDADYE). Positions 830–841 (SPSSLTTGSPYY) are enriched in polar residues. Residues 842-856 (NINNNNNNLSGSGNN) are compositionally biased toward low complexity. Positions 864–873 (TPSNLSPSVN) are enriched in polar residues. The span at 874–896 (SPITINSPMPTSPSNNNNNNNSN) shows a compositional bias: low complexity. Positions 897–906 (EKSKNGKDIG) are enriched in basic and acidic residues. The 243-residue stretch at 924–1166 (VKVDDPDNPK…VILDYCDKLG (243 aa)) folds into the ABC transporter 2 domain. 960 to 967 (GPSGAGKS) is a binding site for ATP. Residues 1256 to 1529 (LRRPAIFVSN…GLSFWGFKKI (274 aa)) form the ABC transmembrane type-2 2 domain. A run of 6 helical transmembrane segments spans residues 1261-1281 (IFVS…TLFV), 1296-1316 (LLFF…PTTV), 1345-1365 (YPFT…IAGL), 1377-1397 (CLFI…CLAV), 1404-1424 (MAST…GFVI), and 1506-1526 (IDIA…FWGF).

This sequence belongs to the ABC transporter superfamily. ABCG family. PDR (TC 3.A.1.205) subfamily.

It localises to the membrane. The sequence is that of ABC transporter G family member 6 (abcG6) from Dictyostelium discoideum (Social amoeba).